The chain runs to 689 residues: UvrABC system protein C (689 aa).

Residues 16 to 95 (TNPGVYRFRD…IKEFAPRFNI (80 aa)) enclose the GIY-YIG domain. The region spanning 208–243 (KPYIRELTRQMNEAAECMDFETAAARRDDVGALERV) is the UVR domain. The interval 316–337 (LAPAASGRRRTARHGSEDVVGQ) is disordered.

The protein belongs to the UvrC family. In terms of assembly, interacts with UvrB in an incision complex.

The protein resides in the cytoplasm. In terms of biological role, the UvrABC repair system catalyzes the recognition and processing of DNA lesions. UvrC both incises the 5' and 3' sides of the lesion. The N-terminal half is responsible for the 3' incision and the C-terminal half is responsible for the 5' incision. The sequence is that of UvrABC system protein C from Kocuria rhizophila (strain ATCC 9341 / DSM 348 / NBRC 103217 / DC2201).